A 155-amino-acid chain; its full sequence is SsrA-binding protein (155 aa).

It belongs to the SmpB family.

The protein resides in the cytoplasm. In terms of biological role, required for rescue of stalled ribosomes mediated by trans-translation. Binds to transfer-messenger RNA (tmRNA), required for stable association of tmRNA with ribosomes. tmRNA and SmpB together mimic tRNA shape, replacing the anticodon stem-loop with SmpB. tmRNA is encoded by the ssrA gene; the 2 termini fold to resemble tRNA(Ala) and it encodes a 'tag peptide', a short internal open reading frame. During trans-translation Ala-aminoacylated tmRNA acts like a tRNA, entering the A-site of stalled ribosomes, displacing the stalled mRNA. The ribosome then switches to translate the ORF on the tmRNA; the nascent peptide is terminated with the 'tag peptide' encoded by the tmRNA and targeted for degradation. The ribosome is freed to recommence translation, which seems to be the essential function of trans-translation. This is SsrA-binding protein from Streptococcus equi subsp. zooepidemicus (strain MGCS10565).